We begin with the raw amino-acid sequence, 303 residues long: UDP-3-O-acyl-N-acetylglucosamine deacetylase (303 aa).

His-78, His-237, and Asp-241 together coordinate Zn(2+). Catalysis depends on His-264, which acts as the Proton donor.

It belongs to the LpxC family. Zn(2+) serves as cofactor.

It catalyses the reaction a UDP-3-O-[(3R)-3-hydroxyacyl]-N-acetyl-alpha-D-glucosamine + H2O = a UDP-3-O-[(3R)-3-hydroxyacyl]-alpha-D-glucosamine + acetate. It functions in the pathway glycolipid biosynthesis; lipid IV(A) biosynthesis; lipid IV(A) from (3R)-3-hydroxytetradecanoyl-[acyl-carrier-protein] and UDP-N-acetyl-alpha-D-glucosamine: step 2/6. Catalyzes the hydrolysis of UDP-3-O-myristoyl-N-acetylglucosamine to form UDP-3-O-myristoylglucosamine and acetate, the committed step in lipid A biosynthesis. The sequence is that of UDP-3-O-acyl-N-acetylglucosamine deacetylase from Pseudomonas fluorescens (strain ATCC BAA-477 / NRRL B-23932 / Pf-5).